A 420-amino-acid polypeptide reads, in one-letter code: Histidine--tRNA ligase (420 aa).

Belongs to the class-II aminoacyl-tRNA synthetase family. Homodimer.

The protein resides in the cytoplasm. The enzyme catalyses tRNA(His) + L-histidine + ATP = L-histidyl-tRNA(His) + AMP + diphosphate + H(+). The polypeptide is Histidine--tRNA ligase (Thermotoga petrophila (strain ATCC BAA-488 / DSM 13995 / JCM 10881 / RKU-1)).